The primary structure comprises 254 residues: Putative biopolymer transport protein ExbB-like 1 (254 aa).

The next 3 membrane-spanning stretches (helical) occupy residues 39-59 (GGVVMFPLLLLSILALTTAFE), 141-161 (LETIIALAPLLGLLGTVTGLI), and 185-205 (IGEALITTAAGMMVAIFALLV).

Belongs to the ExbB/TolQ family.

It is found in the cell inner membrane. Involved in the TonB-dependent energy-dependent transport of various receptor-bound substrates. Protects ExbD from proteolytic degradation and functionally stabilizes TonB. The protein is Putative biopolymer transport protein ExbB-like 1 of Synechocystis sp. (strain ATCC 27184 / PCC 6803 / Kazusa).